The chain runs to 1134 residues: Tyrosine-protein kinase receptor Tie-1 (1134 aa).

A signal peptide spans 1 to 22; sequence MVWWGSSLLLPTLFLASHVGAS. Residues 23-755 are Extracellular-facing; it reads VDLTLLANLR…SRAAEEGLDQ (733 aa). Residues 43–123 enclose the Ig-like C2-type 1 domain; it reads CVSGEAGAGR…VLYVHNSPGA (81 aa). N-linked (GlcNAc...) asparagine glycosylation is found at asparagine 81 and asparagine 159. 3 consecutive EGF-like domains span residues 212-254, 256-301, and 303-343; these read GCGA…TRCE, ACRE…SQCQ, and ACAP…VHCE. Intrachain disulfides connect cysteine 226-cysteine 235, cysteine 229-cysteine 242, cysteine 244-cysteine 253, cysteine 266-cysteine 276, cysteine 270-cysteine 289, cysteine 291-cysteine 300, cysteine 313-cysteine 325, cysteine 319-cysteine 331, and cysteine 333-cysteine 342. The 92-residue stretch at 349 to 440 folds into the Ig-like C2-type 2 domain; that stretch reads PQILSMATEV…GQDSRRFKVN (92 aa). Fibronectin type-III domains lie at 444-543, 546-638, and 642-736; these read PPVP…CPEP, QPWL…LPPS, and APRH…LGNG. N-linked (GlcNAc...) asparagine glycosylation is found at asparagine 501, asparagine 592, and asparagine 705. The chain crosses the membrane as a helical span at residues 756 to 780; that stretch reads QLVLAVVGSVSATCLTILAALLALV. At 781–1134 the chain is on the cytoplasmic side; sequence CIRRSCLHRR…AGIDATAEEA (354 aa). The Protein kinase domain maps to 835–1114; the sequence is ITFEDLIGEG…RMLEARKAYV (280 aa). ATP contacts are provided by residues 841–849 and lysine 866; that span reads IGEGNFGQV. Aspartate 975 functions as the Proton acceptor in the catalytic mechanism. Residue tyrosine 1003 is modified to Phosphotyrosine; by autocatalysis.

Belongs to the protein kinase superfamily. Tyr protein kinase family. Tie subfamily. As to quaternary structure, heterodimer with TEK/TIE2. Interacts with SVEP1 (via C-terminus). Post-translationally, phosphorylated on tyrosine residues in response to ANGPT1, most likely by TEK/TIE2. As to expression, specifically expressed in developing vascular endothelial cells. Abundantly expressed in lung and heart, moderately in brain, liver and kidney, and weakly in thymus, spleen and testis.

The protein resides in the cell membrane. It carries out the reaction L-tyrosyl-[protein] + ATP = O-phospho-L-tyrosyl-[protein] + ADP + H(+). Transmembrane tyrosine-protein kinase that may modulate TEK/TIE2 activity and contribute to the regulation of angiogenesis. This is Tyrosine-protein kinase receptor Tie-1 (Tie1) from Mus musculus (Mouse).